The sequence spans 441 residues: Dihydroorotase (441 aa).

Residues histidine 77 and histidine 79 each coordinate Zn(2+). Substrate contacts are provided by residues 79–81 and asparagine 111; that span reads HFR. Zn(2+) contacts are provided by aspartate 167, histidine 194, and histidine 248. Asparagine 294 contacts substrate. Residue aspartate 321 participates in Zn(2+) binding. The active site involves aspartate 321. Residues histidine 325 and 339 to 340 contribute to the substrate site; that span reads FG.

The protein belongs to the metallo-dependent hydrolases superfamily. DHOase family. Class I DHOase subfamily. Zn(2+) is required as a cofactor.

The catalysed reaction is (S)-dihydroorotate + H2O = N-carbamoyl-L-aspartate + H(+). The protein operates within pyrimidine metabolism; UMP biosynthesis via de novo pathway; (S)-dihydroorotate from bicarbonate: step 3/3. In terms of biological role, catalyzes the reversible cyclization of carbamoyl aspartate to dihydroorotate. This Wolbachia sp. subsp. Drosophila simulans (strain wRi) protein is Dihydroorotase.